We begin with the raw amino-acid sequence, 182 residues long: Putative manganese efflux pump MntP (182 aa).

6 helical membrane-spanning segments follow: residues 6-26 (LIPLIIMAFALGMDAFSVSLG), 37-57 (ILYIGVTIGIFHIIMPFIGMV), 71-91 (HFAGAILLIGLGFYIVYSSIL), 101-121 (IGISLFVFAFGVSIDSFSVGL), 131-151 (IITILLFGFVSMLLAWIGLLI), and 162-182 (YGEIVGGIILVGFGLYLLFPI).

The protein belongs to the MntP (TC 9.B.29) family.

The protein resides in the cell membrane. Its function is as follows. Probably functions as a manganese efflux pump. The protein is Putative manganese efflux pump MntP of Bacillus anthracis (strain A0248).